A 637-amino-acid chain; its full sequence is Phosphomethylpyrimidine synthase (637 aa).

Substrate is bound by residues asparagine 242, methionine 271, tyrosine 300, histidine 336, 356 to 358 (SRG), 397 to 400 (DGLR), and glutamate 436. Histidine 440 serves as a coordination point for Zn(2+). Tyrosine 463 provides a ligand contact to substrate. A Zn(2+)-binding site is contributed by histidine 504. [4Fe-4S] cluster is bound by residues cysteine 584, cysteine 587, and cysteine 592.

The protein belongs to the ThiC family. As to quaternary structure, homodimer. The cofactor is [4Fe-4S] cluster.

The catalysed reaction is 5-amino-1-(5-phospho-beta-D-ribosyl)imidazole + S-adenosyl-L-methionine = 4-amino-2-methyl-5-(phosphooxymethyl)pyrimidine + CO + 5'-deoxyadenosine + formate + L-methionine + 3 H(+). The protein operates within cofactor biosynthesis; thiamine diphosphate biosynthesis. Functionally, catalyzes the synthesis of the hydroxymethylpyrimidine phosphate (HMP-P) moiety of thiamine from aminoimidazole ribotide (AIR) in a radical S-adenosyl-L-methionine (SAM)-dependent reaction. The protein is Phosphomethylpyrimidine synthase of Bordetella pertussis (strain Tohama I / ATCC BAA-589 / NCTC 13251).